Here is an 895-residue protein sequence, read N- to C-terminus: MLSHEITQRWLSYFEARDHHVVPSASLVSQQPGAMFTIAGMVPFIPYFLGQETPPYQRATSVQKCIRTLDIDEVGKTARHGTFFQMAGNFSFGDYFKSQAIPMAWELLTTAPEQGGFGLDPERLWVTVYEGDQESYDLWHDTVGLPAQRIQRMGRDENYWDTGQPGPAGPDSEIFYDRGPRYGKDGGPAVDDDRYIEIWNLVFMQYQRGEGNGKDYEILGELPRKNIDTGLGVERLAMLLQGVENFYETDQVRPVLDAAAKLSGRTYHGAEKAGEQGYDDDVRMRVVADHVRSSLMLIADGVTPGNEGRGYILRRLLRRAVRAMRLLGVTEPCLPVLLPESRDAMKGVYPVVAEDFERISRIAYAEERAFLKTIESGTTRLEHAVEVAKGEQRALSGADAFALHDTFGFPIDLTLEMAEEAGVSVDETAFRALMAEQRQRAQEDARAKKGALADLSELRRMLDDHGSEFTGYTELVTPTTVRAILSGGVSVPAASEGEHVEVVLERTPFYAEAGGQAADVGTIDSSDGAQLTVEDVQQPVKGLSVHKVTVSAGQVLVGDEVTARVDSRRRHDGEAAHSGTHVIHAALHDVLGPDAVQRGSFNKEGYLRFDFSHGEALNAGQIQEIEQIANTAIRDDFEVVTREMPLAEAKKLGAMSLFGEKYGDEVRVVEMNGPWSRELCGGTHVGSTSQLGSLSLVSEQSVGSGNRRVEALVGLNSFNHLAAERTLVNQLTGMLKVQSSAELPERLAATLDKLKETERQLAGLRQQQLQAQAGQLARDAERVGPVTAVLHDAGEIASADALRSLALDLRTRLGSEPAVAAVTGVANDRPLVVVAVNDAARDAGLAAGQLVRTAATTLGGGGGGKPDVAQGGGSDAAKIPDALAAIRRQIQSTAG.

Zn(2+) is bound by residues histidine 577, histidine 581, cysteine 680, and histidine 684.

Belongs to the class-II aminoacyl-tRNA synthetase family. Requires Zn(2+) as cofactor.

It is found in the cytoplasm. It catalyses the reaction tRNA(Ala) + L-alanine + ATP = L-alanyl-tRNA(Ala) + AMP + diphosphate. Catalyzes the attachment of alanine to tRNA(Ala) in a two-step reaction: alanine is first activated by ATP to form Ala-AMP and then transferred to the acceptor end of tRNA(Ala). Also edits incorrectly charged Ser-tRNA(Ala) and Gly-tRNA(Ala) via its editing domain. The polypeptide is Alanine--tRNA ligase (Kocuria rhizophila (strain ATCC 9341 / DSM 348 / NBRC 103217 / DC2201)).